The primary structure comprises 99 residues: Nucleoid-associated protein SEQ_0368 (99 aa).

This sequence belongs to the YbaB/EbfC family. As to quaternary structure, homodimer.

It localises to the cytoplasm. Its subcellular location is the nucleoid. Its function is as follows. Binds to DNA and alters its conformation. May be involved in regulation of gene expression, nucleoid organization and DNA protection. This is Nucleoid-associated protein SEQ_0368 from Streptococcus equi subsp. equi (strain 4047).